A 429-amino-acid polypeptide reads, in one-letter code: MDRIKIVGGNKLNGVIPISGAKNAALPLMIASLLTDDTLTLENVPHLADVEQLIRILSNHGVDYSVNGRREHQNGPYSRTIHFTARNIVDTTAPYELVSRMRASFWVIGPLLARMGEANVSLPGGCAIGTRPVDLLLDALLALGAEIDIENGYAKAKARNGLVGARYKFPKVSVGATHVMLMAATLAKGETIIENAAREPEVANLADCLNAMGAKISGAGSSTIHVQGVTNLSGARVRIIPDRIEAGTYAMAVAMTGGDVLLEGAQESQLSCVLETLRQAGAEINETNSGLRVVRNGHGIQPVDITTDPFPGFPTDLQAQFMGLMTRAKGTSHITETIFENRFMHVQELARLGAKISLSGQTATVEGVERLKGAQVMATDLRASVSLVIAGLAAEGETIVNRVYHLDRGFERLEEKLSRCGADVKRISG.

22-23 is a phosphoenolpyruvate binding site; the sequence is KN. Residue arginine 102 coordinates UDP-N-acetyl-alpha-D-glucosamine. Cysteine 126 functions as the Proton donor in the catalytic mechanism. At cysteine 126 the chain carries 2-(S-cysteinyl)pyruvic acid O-phosphothioketal. UDP-N-acetyl-alpha-D-glucosamine-binding positions include 131 to 135, 171 to 174, aspartate 316, and isoleucine 338; these read RPVDL and KVSV.

It belongs to the EPSP synthase family. MurA subfamily.

The protein resides in the cytoplasm. The enzyme catalyses phosphoenolpyruvate + UDP-N-acetyl-alpha-D-glucosamine = UDP-N-acetyl-3-O-(1-carboxyvinyl)-alpha-D-glucosamine + phosphate. Its pathway is cell wall biogenesis; peptidoglycan biosynthesis. In terms of biological role, cell wall formation. Adds enolpyruvyl to UDP-N-acetylglucosamine. The polypeptide is UDP-N-acetylglucosamine 1-carboxyvinyltransferase (Brucella abortus (strain S19)).